The following is a 272-amino-acid chain: Shikimate dehydrogenase (NADP(+)) (272 aa).

Shikimate-binding positions include 14-16 (SKS) and Thr61. Lys65 functions as the Proton acceptor in the catalytic mechanism. An NADP(+)-binding site is contributed by Glu77. 2 residues coordinate shikimate: Asn86 and Asp102. NADP(+) contacts are provided by residues 126-130 (GAGGA), 149-154 (NRTVSR), and Met213. Tyr215 contacts shikimate. An NADP(+)-binding site is contributed by Gly237.

Belongs to the shikimate dehydrogenase family. Homodimer.

The catalysed reaction is shikimate + NADP(+) = 3-dehydroshikimate + NADPH + H(+). It functions in the pathway metabolic intermediate biosynthesis; chorismate biosynthesis; chorismate from D-erythrose 4-phosphate and phosphoenolpyruvate: step 4/7. Functionally, involved in the biosynthesis of the chorismate, which leads to the biosynthesis of aromatic amino acids. Catalyzes the reversible NADPH linked reduction of 3-dehydroshikimate (DHSA) to yield shikimate (SA). The chain is Shikimate dehydrogenase (NADP(+)) from Shigella boydii serotype 4 (strain Sb227).